A 670-amino-acid chain; its full sequence is DNA ligase (670 aa).

Residues 36–40 (DAQYD), 85–86 (SL), and Glu-116 contribute to the NAD(+) site. Catalysis depends on Lys-118, which acts as the N6-AMP-lysine intermediate. Arg-139, Glu-174, Lys-290, and Lys-314 together coordinate NAD(+). Cys-408, Cys-411, Cys-426, and Cys-431 together coordinate Zn(2+). Positions 591–670 (STDQTLSGKT…QDFVKLLQQQ (80 aa)) constitute a BRCT domain.

The protein belongs to the NAD-dependent DNA ligase family. LigA subfamily. Mg(2+) is required as a cofactor. The cofactor is Mn(2+).

It carries out the reaction NAD(+) + (deoxyribonucleotide)n-3'-hydroxyl + 5'-phospho-(deoxyribonucleotide)m = (deoxyribonucleotide)n+m + AMP + beta-nicotinamide D-nucleotide.. Its function is as follows. DNA ligase that catalyzes the formation of phosphodiester linkages between 5'-phosphoryl and 3'-hydroxyl groups in double-stranded DNA using NAD as a coenzyme and as the energy source for the reaction. It is essential for DNA replication and repair of damaged DNA. In Desulforamulus reducens (strain ATCC BAA-1160 / DSM 100696 / MI-1) (Desulfotomaculum reducens), this protein is DNA ligase.